A 740-amino-acid chain; its full sequence is Alpha-1,6-mannosylglycoprotein 6-beta-N-acetylglucosaminyltransferase A (740 aa).

Over 1 to 13 (MAFFSPWKLSSQK) the chain is Cytoplasmic. The helical; Signal-anchor for type II membrane protein transmembrane segment at 14–30 (LGFFLVTFGFIWGMMLL) threads the bilayer. Residues 31 to 740 (HFTIQQRTQP…GQVALCKDCL (710 aa)) are Lumenal-facing. Residues asparagine 109, asparagine 114, and asparagine 117 are each glycosylated (N-linked (GlcNAc...) asparagine). 9 disulfide bridges follow: cysteine 144–cysteine 182, cysteine 155–cysteine 195, cysteine 171–cysteine 337, cysteine 371–cysteine 625, cysteine 648–cysteine 723, cysteine 652–cysteine 725, cysteine 659–cysteine 712, cysteine 680–cysteine 701, and cysteine 736–cysteine 739. Positions 212-740 (NSLAEIRTDF…GQVALCKDCL (529 aa)) are sufficient for catalytic activity. Asparagine 333 carries an N-linked (GlcNAc...) asparagine glycan. 377-378 (DS) serves as a coordination point for substrate. Residues asparagine 432 and asparagine 446 are each glycosylated (N-linked (GlcNAc...) asparagine). Glutamate 525 provides a ligand contact to UDP-N-acetyl-alpha-D-glucosamine. Lysine 553 lines the substrate pocket.

The protein belongs to the glycosyltransferase 18 family. In terms of processing, N-glycosylated. Post-translationally, a secreted form is released from the membrane after cleavage by gamma-secretase. As to expression, detected in kidney (at protein level). Detected in kidney.

It localises to the golgi apparatus membrane. The protein localises to the secreted. It catalyses the reaction N(4)-{beta-D-GlcNAc-(1-&gt;2)-[beta-D-GlcNAc-(1-&gt;4)]-alpha-D-Man-(1-&gt;3)-[beta-D-GlcNAc-(1-&gt;2)-alpha-D-Man-(1-&gt;6)]-beta-D-Man-(1-&gt;4)-beta-D-GlcNAc-(1-&gt;4)-beta-D-GlcNAc}-L-asparaginyl-[protein] + UDP-N-acetyl-alpha-D-glucosamine = N(4)-{beta-D-GlcNAc-(1-&gt;2)-[beta-D-GlcNAc-(1-&gt;4)]-alpha-D-Man-(1-&gt;3)-[beta-D-GlcNAc-(1-&gt;2)-[beta-D-GlcNAc-(1-&gt;6)]-alpha-D-Man-(1-&gt;6)]-beta-D-Man-(1-&gt;4)-beta-D-GlcNAc-(1-&gt;4)-beta-D-GlcNAc}-L-asparaginyl-[protein] + UDP + H(+). It functions in the pathway protein modification; protein glycosylation. Its function is as follows. Catalyzes the addition of N-acetylglucosamine (GlcNAc) in beta 1-6 linkage to the alpha-linked mannose of biantennary N-linked oligosaccharides. Catalyzes an important step in the biosynthesis of branched, complex-type N-glycans, such as those found on EGFR, TGFR (TGF-beta receptor) and CDH2. Via its role in the biosynthesis of complex N-glycans, plays an important role in the activation of cellular signaling pathways, reorganization of the actin cytoskeleton, cell-cell adhesion and cell migration. MGAT5-dependent EGFR N-glycosylation enhances the interaction between EGFR and LGALS3 and thereby prevents rapid EGFR endocytosis and prolongs EGFR signaling. Required for efficient interaction between TGFB1 and its receptor. Enhances activation of intracellular signaling pathways by several types of growth factors, including FGF2, PDGF, IGF, TGFB1 and EGF. MGAT5-dependent CDH2 N-glycosylation inhibits CDH2-mediated homotypic cell-cell adhesion and contributes to the regulation of downstream signaling pathways. Promotes cell migration. Contributes to the regulation of the inflammatory response. MGAT5-dependent TCR N-glycosylation enhances the interaction between TCR and LGALS3, limits agonist-induced TCR clustering, and thereby dampens TCR-mediated responses to antigens. Required for normal leukocyte evasation and accumulation at sites of inflammation. Inhibits attachment of monocytes to the vascular endothelium and subsequent monocyte diapedesis. In terms of biological role, promotes proliferation of umbilical vein endothelial cells and angiogenesis, at least in part by promoting the release of the growth factor FGF2 from the extracellular matrix. The chain is Alpha-1,6-mannosylglycoprotein 6-beta-N-acetylglucosaminyltransferase A (Mgat5) from Rattus norvegicus (Rat).